The primary structure comprises 102 residues: Small ribosomal subunit protein uS10 (102 aa).

This sequence belongs to the universal ribosomal protein uS10 family. As to quaternary structure, part of the 30S ribosomal subunit.

Its function is as follows. Involved in the binding of tRNA to the ribosomes. In Geobacillus kaustophilus (strain HTA426), this protein is Small ribosomal subunit protein uS10.